The following is a 62-amino-acid chain: Photosystem II reaction center protein Z (62 aa).

Helical transmembrane passes span 8–28 (AVFALIVTSSILLISVPVVFA) and 41–61 (FSGTSLWIGLVFLVGILNSLI).

It belongs to the PsbZ family. PSII is composed of 1 copy each of membrane proteins PsbA, PsbB, PsbC, PsbD, PsbE, PsbF, PsbH, PsbI, PsbJ, PsbK, PsbL, PsbM, PsbT, PsbY, PsbZ, Psb30/Ycf12, at least 3 peripheral proteins of the oxygen-evolving complex and a large number of cofactors. It forms dimeric complexes.

It localises to the plastid. Its subcellular location is the chloroplast thylakoid membrane. In terms of biological role, may control the interaction of photosystem II (PSII) cores with the light-harvesting antenna, regulates electron flow through the 2 photosystem reaction centers. PSII is a light-driven water plastoquinone oxidoreductase, using light energy to abstract electrons from H(2)O, generating a proton gradient subsequently used for ATP formation. The sequence is that of Photosystem II reaction center protein Z from Cucumis sativus (Cucumber).